The following is a 440-amino-acid chain: Xylose isomerase (440 aa).

Catalysis depends on residues H100 and D103. Positions 231, 267, 270, 295, 306, 308, and 338 each coordinate Mg(2+).

The protein belongs to the xylose isomerase family. Homotetramer. The cofactor is Mg(2+).

The protein localises to the cytoplasm. It catalyses the reaction alpha-D-xylose = alpha-D-xylulofuranose. This is Xylose isomerase from Burkholderia orbicola (strain MC0-3).